A 158-amino-acid chain; its full sequence is Ribosome maturation factor RimP (158 aa).

Belongs to the RimP family.

The protein resides in the cytoplasm. Required for maturation of 30S ribosomal subunits. The sequence is that of Ribosome maturation factor RimP from Pseudomonas fluorescens (strain ATCC BAA-477 / NRRL B-23932 / Pf-5).